Reading from the N-terminus, the 251-residue chain is Glucosamine-6-phosphate deaminase (251 aa).

Aspartate 73 (proton acceptor; for enolization step) is an active-site residue. Asparagine 142 functions as the For ring-opening step in the catalytic mechanism. Histidine 144 (proton acceptor; for ring-opening step) is an active-site residue. Glutamate 149 serves as the catalytic For ring-opening step.

The protein belongs to the glucosamine/galactosamine-6-phosphate isomerase family. NagB subfamily.

It catalyses the reaction alpha-D-glucosamine 6-phosphate + H2O = beta-D-fructose 6-phosphate + NH4(+). It participates in amino-sugar metabolism; N-acetylneuraminate degradation; D-fructose 6-phosphate from N-acetylneuraminate: step 5/5. In terms of biological role, catalyzes the reversible isomerization-deamination of glucosamine 6-phosphate (GlcN6P) to form fructose 6-phosphate (Fru6P) and ammonium ion. The chain is Glucosamine-6-phosphate deaminase from Rhodopirellula baltica (strain DSM 10527 / NCIMB 13988 / SH1).